Here is a 200-residue protein sequence, read N- to C-terminus: MRLFGMCESVKKKAAVIVVVSLMAFCCAGFAVAAEHGAEAAPKGWVATDTFRVMNFAVLAIALFLLLRKPVAGALNNRIAGIREELARLEAQKEEARKALEAYNERLKMLDKEAEKIIEDYKKQGEAAKARIMESAQASAAKLEEQARRNIDNEFESARQKLRLDIFEQAVARAEALVTEKITPDDQHRLVEEYLDKAVL.

A helical transmembrane segment spans residues 14-34 (AAVIVVVSLMAFCCAGFAVAA).

Belongs to the ATPase B chain family. In terms of assembly, F-type ATPases have 2 components, F(1) - the catalytic core - and F(0) - the membrane proton channel. F(1) has five subunits: alpha(3), beta(3), gamma(1), delta(1), epsilon(1). F(0) has three main subunits: a(1), b(2) and c(10-14). The alpha and beta chains form an alternating ring which encloses part of the gamma chain. F(1) is attached to F(0) by a central stalk formed by the gamma and epsilon chains, while a peripheral stalk is formed by the delta and b chains.

It localises to the cell inner membrane. Functionally, f(1)F(0) ATP synthase produces ATP from ADP in the presence of a proton or sodium gradient. F-type ATPases consist of two structural domains, F(1) containing the extramembraneous catalytic core and F(0) containing the membrane proton channel, linked together by a central stalk and a peripheral stalk. During catalysis, ATP synthesis in the catalytic domain of F(1) is coupled via a rotary mechanism of the central stalk subunits to proton translocation. Its function is as follows. Component of the F(0) channel, it forms part of the peripheral stalk, linking F(1) to F(0). The polypeptide is ATP synthase subunit b 1 (Desulfosudis oleivorans (strain DSM 6200 / JCM 39069 / Hxd3) (Desulfococcus oleovorans)).